A 151-amino-acid polypeptide reads, in one-letter code: MTGLERQLTEMLEAPVGALGYELVGLEFIRAGEHSTLRVFIDHENGIFVEDCAEASRQISAVMDVEDPITVAYNLEVSSPGLERPLFKAAHYQQFVGHEVSLVLKMPMNNRRKWKGDILDINGEIVTVTVDGNNEEFALSNISKANLVPKF.

The protein belongs to the RimP family.

It is found in the cytoplasm. Its function is as follows. Required for maturation of 30S ribosomal subunits. This chain is Ribosome maturation factor RimP, found in Aliivibrio salmonicida (strain LFI1238) (Vibrio salmonicida (strain LFI1238)).